Consider the following 20-residue polypeptide: Probable cinnamyl alcohol dehydrogenase 1 (20 aa).

This sequence belongs to the zinc-containing alcohol dehydrogenase family. Zn(2+) is required as a cofactor.

The enzyme catalyses (E)-cinnamyl alcohol + NADP(+) = (E)-cinnamaldehyde + NADPH + H(+). It catalyses the reaction (E)-coniferol + NADP(+) = (E)-coniferaldehyde + NADPH + H(+). The catalysed reaction is (E)-sinapyl alcohol + NADP(+) = (E)-sinapaldehyde + NADPH + H(+). It carries out the reaction (E)-4-coumaroyl alcohol + NADP(+) = (E)-4-coumaraldehyde + NADPH + H(+). The enzyme catalyses (E)-caffeyl alcohol + NADP(+) = (E)-caffeyl aldehyde + NADPH + H(+). It functions in the pathway aromatic compound metabolism; phenylpropanoid biosynthesis. Involved in lignin biosynthesis. Catalyzes the final step specific for the production of lignin monomers, like coniferyl alcohol, sinapyl alcohol and 4-coumaryl alcohol. This Pseudotsuga menziesii (Douglas-fir) protein is Probable cinnamyl alcohol dehydrogenase 1.